A 150-amino-acid chain; its full sequence is Histone deacetylase complex subunit SAP18 (150 aa).

This sequence belongs to the SAP18 family. As to quaternary structure, forms a complex with SIN3 and histone deacetylase. Interacts with the N-terminal residues of TRL. Interacts with BCD; in vitro and yeast cells.

The protein resides in the nucleus. It localises to the cytoplasm. In terms of biological role, involved in the tethering of the SIN3 complex to core histone proteins. Interacts with bicoid (bcd) to repress transcription of bicoid target genes in the anterior tip of the embryo; a process known as retraction. Interacts with Trl and binds to Polycomb response elements at the bithorax complex. May contribute to the regulation of other homeotic gene expressions. The protein is Histone deacetylase complex subunit SAP18 (Bin1) of Drosophila melanogaster (Fruit fly).